Here is a 147-residue protein sequence, read N- to C-terminus: Transcriptional regulator MraZ (147 aa).

2 SpoVT-AbrB domains span residues 6–48 and 77–120; these read NFER…NSEE and TVEV…SKAK.

It belongs to the MraZ family. In terms of assembly, forms oligomers.

The protein localises to the cytoplasm. The protein resides in the nucleoid. This Mycoplasmopsis pulmonis (strain UAB CTIP) (Mycoplasma pulmonis) protein is Transcriptional regulator MraZ.